A 79-amino-acid chain; its full sequence is Small ribosomal subunit protein bS21 (79 aa).

Composition is skewed to basic residues over residues 47–59 and 69–79; these read RKQA…HLKK and GVGHRRKKSTT. Positions 47–79 are disordered; that stretch reads RKQAAAVKRHLKKISRDVSSRRGVGHRRKKSTT.

The protein belongs to the bacterial ribosomal protein bS21 family.

In Legionella pneumophila (strain Paris), this protein is Small ribosomal subunit protein bS21.